A 176-amino-acid chain; its full sequence is Transcription factor E (176 aa).

The 83-residue stretch at 8–90 (NDPVIQKYLH…LWTFHYENIP (83 aa)) folds into the HTH TFE/IIEalpha-type domain.

The protein belongs to the TFE family. Monomer. Interaction with RNA polymerase subunits RpoF and RpoE is necessary for Tfe stimulatory transcription activity. Able to interact with Tbp and RNA polymerase in the absence of DNA promoter. Interacts both with the preinitiation and elongation complexes.

In terms of biological role, transcription factor that plays a role in the activation of archaeal genes transcribed by RNA polymerase. Facilitates transcription initiation by enhancing TATA-box recognition by TATA-box-binding protein (Tbp), and transcription factor B (Tfb) and RNA polymerase recruitment. Not absolutely required for transcription in vitro, but particularly important in cases where Tbp or Tfb function is not optimal. It dynamically alters the nucleic acid-binding properties of RNA polymerases by stabilizing the initiation complex and destabilizing elongation complexes. Seems to translocate with the RNA polymerase following initiation and acts by binding to the non template strand of the transcription bubble in elongation complexes. This is Transcription factor E from Haloquadratum walsbyi (strain DSM 16790 / HBSQ001).